The sequence spans 380 residues: Erythronate-4-phosphate dehydrogenase (380 aa).

Residues Ser45 and Thr66 each coordinate substrate. Residues Asp146, Thr174, 205–207 (ASR), and Asp231 each bind NAD(+). Arg207 is a catalytic residue. Residue Glu236 is part of the active site. His253 (proton donor) is an active-site residue. Gly256 provides a ligand contact to NAD(+). Tyr257 provides a ligand contact to substrate.

The protein belongs to the D-isomer specific 2-hydroxyacid dehydrogenase family. PdxB subfamily. In terms of assembly, homodimer.

The protein resides in the cytoplasm. It carries out the reaction 4-phospho-D-erythronate + NAD(+) = (R)-3-hydroxy-2-oxo-4-phosphooxybutanoate + NADH + H(+). The protein operates within cofactor biosynthesis; pyridoxine 5'-phosphate biosynthesis; pyridoxine 5'-phosphate from D-erythrose 4-phosphate: step 2/5. Its function is as follows. Catalyzes the oxidation of erythronate-4-phosphate to 3-hydroxy-2-oxo-4-phosphonooxybutanoate. This Pseudomonas putida (strain ATCC 700007 / DSM 6899 / JCM 31910 / BCRC 17059 / LMG 24140 / F1) protein is Erythronate-4-phosphate dehydrogenase.